A 211-amino-acid chain; its full sequence is ATP phosphoribosyltransferase (211 aa).

This sequence belongs to the ATP phosphoribosyltransferase family. Short subfamily. In terms of assembly, heteromultimer composed of HisG and HisZ subunits.

It localises to the cytoplasm. It catalyses the reaction 1-(5-phospho-beta-D-ribosyl)-ATP + diphosphate = 5-phospho-alpha-D-ribose 1-diphosphate + ATP. The protein operates within amino-acid biosynthesis; L-histidine biosynthesis; L-histidine from 5-phospho-alpha-D-ribose 1-diphosphate: step 1/9. Catalyzes the condensation of ATP and 5-phosphoribose 1-diphosphate to form N'-(5'-phosphoribosyl)-ATP (PR-ATP). Has a crucial role in the pathway because the rate of histidine biosynthesis seems to be controlled primarily by regulation of HisG enzymatic activity. This chain is ATP phosphoribosyltransferase, found in Pseudomonas entomophila (strain L48).